Here is a 349-residue protein sequence, read N- to C-terminus: Adenosine deaminase (349 aa).

The Zn(2+) site is built by histidine 25 and histidine 27. Substrate is bound by residues histidine 27, aspartate 29, and glycine 182. Position 209 (histidine 209) interacts with Zn(2+). Glutamate 212 (proton donor) is an active-site residue. Aspartate 289 provides a ligand contact to Zn(2+).

This sequence belongs to the metallo-dependent hydrolases superfamily. Adenosine and AMP deaminases family. Adenosine deaminase subfamily. The cofactor is Zn(2+).

The enzyme catalyses adenosine + H2O + H(+) = inosine + NH4(+). It carries out the reaction 2'-deoxyadenosine + H2O + H(+) = 2'-deoxyinosine + NH4(+). Its function is as follows. Catalyzes the hydrolytic deamination of adenosine and 2-deoxyadenosine. This chain is Adenosine deaminase, found in Streptococcus mutans serotype c (strain ATCC 700610 / UA159).